We begin with the raw amino-acid sequence, 287 residues long: Phosphatidylserine decarboxylase proenzyme (287 aa).

Catalysis depends on charge relay system; for autoendoproteolytic cleavage activity residues Asp-89, His-146, and Ser-252. The active-site Schiff-base intermediate with substrate; via pyruvic acid; for decarboxylase activity is Ser-252. Ser-252 bears the Pyruvic acid (Ser); by autocatalysis mark.

The protein belongs to the phosphatidylserine decarboxylase family. PSD-B subfamily. Prokaryotic type I sub-subfamily. Heterodimer of a large membrane-associated beta subunit and a small pyruvoyl-containing alpha subunit. Requires pyruvate as cofactor. Is synthesized initially as an inactive proenzyme. Formation of the active enzyme involves a self-maturation process in which the active site pyruvoyl group is generated from an internal serine residue via an autocatalytic post-translational modification. Two non-identical subunits are generated from the proenzyme in this reaction, and the pyruvate is formed at the N-terminus of the alpha chain, which is derived from the carboxyl end of the proenzyme. The autoendoproteolytic cleavage occurs by a canonical serine protease mechanism, in which the side chain hydroxyl group of the serine supplies its oxygen atom to form the C-terminus of the beta chain, while the remainder of the serine residue undergoes an oxidative deamination to produce ammonia and the pyruvoyl prosthetic group on the alpha chain. During this reaction, the Ser that is part of the protease active site of the proenzyme becomes the pyruvoyl prosthetic group, which constitutes an essential element of the active site of the mature decarboxylase.

It localises to the cell membrane. It catalyses the reaction a 1,2-diacyl-sn-glycero-3-phospho-L-serine + H(+) = a 1,2-diacyl-sn-glycero-3-phosphoethanolamine + CO2. It participates in phospholipid metabolism; phosphatidylethanolamine biosynthesis; phosphatidylethanolamine from CDP-diacylglycerol: step 2/2. Catalyzes the formation of phosphatidylethanolamine (PtdEtn) from phosphatidylserine (PtdSer). This is Phosphatidylserine decarboxylase proenzyme from Shewanella halifaxensis (strain HAW-EB4).